The primary structure comprises 586 residues: Acetylcholinesterase (586 aa).

Positions 1–21 are cleaved as a signal peptide; sequence MNLLVTSSLGVLLHLVVLCQA. N-linked (GlcNAc...) asparagine glycosylation occurs at N80. C88 and C115 form a disulfide bridge. S221 acts as the Acyl-ester intermediate in catalysis. C275 and C286 form a disulfide bridge. The active-site Charge relay system is E348. An intrachain disulfide couples C423 to C542. Residue N437 is glycosylated (N-linked (GlcNAc...) asparagine). The Charge relay system role is filled by H461. N-linked (GlcNAc...) asparagine glycosylation is found at N478 and N554. S564 is lipidated: GPI-anchor amidated serine. The propeptide at 565 to 586 is removed in mature form; the sequence is SGTSSSKGIIFYVLFSILYLIF.

Belongs to the type-B carboxylesterase/lipase family. In terms of assembly, isoform H form is a homodimer; the asymmetric form is a disulfide-bonded oligomer composed of a collagenic subunit (Q) and a variable number of T catalytic subunits. In terms of processing, an interchain disulfide bond is present in what becomes position 593 of the T isoform. As to expression, found in the synapses and to a lower extent in extrajunctional areas of muscle and nerve, and on erythrocyte membranes.

Its subcellular location is the cell membrane. It localises to the synapse. The enzyme catalyses acetylcholine + H2O = choline + acetate + H(+). Its activity is regulated as follows. Inhibited by substrate concentrations above 0.5 mM. Terminates signal transduction at the neuromuscular junction by rapid hydrolysis of the acetylcholine released into the synaptic cleft. May be involved in cell-cell interactions. The sequence is that of Acetylcholinesterase (ache) from Tetronarce californica (Pacific electric ray).